The chain runs to 181 residues: Probable Brix domain-containing ribosomal biogenesis protein (181 aa).

A Brix domain is found at 5–181 (CKVIITTSRE…RIKKVVYRHV (177 aa)).

Functionally, probably involved in the biogenesis of the ribosome. The sequence is that of Probable Brix domain-containing ribosomal biogenesis protein from Pyrobaculum aerophilum (strain ATCC 51768 / DSM 7523 / JCM 9630 / CIP 104966 / NBRC 100827 / IM2).